The sequence spans 76 residues: Transcription attenuation protein MtrB (76 aa).

The protein belongs to the MtrB family. As to quaternary structure, oligomer of 11 identical subunits arranged in doughnut-like structure.

Functionally, required for transcription attenuation control in the Trp operon. This trans-acting factor seems to recognize a 10 bases nucleotide sequence in the Trp leader transcript causing transcription termination. Binds the leader RNA only in presence of L-tryptophan. The polypeptide is Transcription attenuation protein MtrB (mtrB) (Bacillus pumilus (Bacillus mesentericus)).